A 334-amino-acid chain; its full sequence is Probable tRNA pseudouridine synthase B (334 aa).

Residue Asp82 is the Nucleophile of the active site. The PUA domain occupies 250 to 325 (LPKIWIKDSA…IAVDVEKVFM (76 aa)).

This sequence belongs to the pseudouridine synthase TruB family. Type 2 subfamily.

The catalysed reaction is uridine(55) in tRNA = pseudouridine(55) in tRNA. Its function is as follows. Could be responsible for synthesis of pseudouridine from uracil-55 in the psi GC loop of transfer RNAs. The polypeptide is Probable tRNA pseudouridine synthase B (Pyrococcus horikoshii (strain ATCC 700860 / DSM 12428 / JCM 9974 / NBRC 100139 / OT-3)).